The following is a 110-amino-acid chain: Endoribonuclease SymE (110 aa).

The SpoVT-AbrB domain maps to 29 to 74; sequence SRYPDYTRIPALTMKGQWLEAAGFATGTEVDVRVMNGCIVLTAQQP.

It belongs to the SymE family.

Its subcellular location is the cytoplasm. In terms of biological role, involved in the degradation and recycling of damaged RNA. It is itself a target for degradation by the ATP-dependent protease Lon. This is Endoribonuclease SymE from Salmonella typhi.